Here is a 334-residue protein sequence, read N- to C-terminus: MTLRIGIIGTGAIGTDHARRINRVLSGAEVTAVTDVNRDNAEACVAGVAPGAQILGSAEEVIAASDAVLVCSWGAAHEAQVLAAIAAGKPCFCEKPLATEAYGARRIVEAEGAMGRRLVQVGFMRRYDRGYIALKETVRTRLGPPLMIHAAHRNPTVPGRYRTPMAIHDTLIHEIDVLRWLLDDEYVSAQVIFPRATRHTHAGLRDPQIVLLETAKGVRIDVEIFVNCRYGYDIQCEVVGEEGTARLPEPMAIPTRLGAMFGQPILMDWKDRFIDSYDVELQDFLKAAAQGTAAGPSAWDGYAAAITADVCVQAQERPGAILPVTLPARPALYA.

The protein belongs to the Gfo/Idh/MocA family. In terms of assembly, homotetramer.

It catalyses the reaction myo-inositol + NAD(+) = scyllo-inosose + NADH + H(+). Involved in the oxidation of myo-inositol (MI) to 2-keto-myo-inositol (2KMI or 2-inosose). The polypeptide is Inositol 2-dehydrogenase (Cereibacter sphaeroides (strain ATCC 17029 / ATH 2.4.9) (Rhodobacter sphaeroides)).